The chain runs to 232 residues: 2-C-methyl-D-erythritol 4-phosphate cytidylyltransferase (232 aa).

This sequence belongs to the IspD/TarI cytidylyltransferase family. IspD subfamily.

It carries out the reaction 2-C-methyl-D-erythritol 4-phosphate + CTP + H(+) = 4-CDP-2-C-methyl-D-erythritol + diphosphate. The protein operates within isoprenoid biosynthesis; isopentenyl diphosphate biosynthesis via DXP pathway; isopentenyl diphosphate from 1-deoxy-D-xylulose 5-phosphate: step 2/6. Its function is as follows. Catalyzes the formation of 4-diphosphocytidyl-2-C-methyl-D-erythritol from CTP and 2-C-methyl-D-erythritol 4-phosphate (MEP). The chain is 2-C-methyl-D-erythritol 4-phosphate cytidylyltransferase from Shewanella frigidimarina (strain NCIMB 400).